The sequence spans 271 residues: Phosphatidylglycerol--prolipoprotein diacylglyceryl transferase (271 aa).

A run of 3 helical transmembrane segments spans residues 17 to 37 (LAIHWYGLTYLAAFGLFFFLA), 63 to 83 (ILFLGVMGVVIGGRLGYCLFY), and 95 to 115 (IFAVWQGGMSFHGGMLGVLVS). R146 lines the a 1,2-diacyl-sn-glycero-3-phospho-(1'-sn-glycerol) pocket. Transmembrane regions (helical) follow at residues 182–202 (SQVYQFLMEGLLLFVLLWLYA), 209–229 (GQVSGAFLVGYGVFRFIAEFF), and 243–263 (MSMGQWLCVPMIAAGIWLWIW).

This sequence belongs to the Lgt family.

Its subcellular location is the cell inner membrane. The enzyme catalyses L-cysteinyl-[prolipoprotein] + a 1,2-diacyl-sn-glycero-3-phospho-(1'-sn-glycerol) = an S-1,2-diacyl-sn-glyceryl-L-cysteinyl-[prolipoprotein] + sn-glycerol 1-phosphate + H(+). Its pathway is protein modification; lipoprotein biosynthesis (diacylglyceryl transfer). Its function is as follows. Catalyzes the transfer of the diacylglyceryl group from phosphatidylglycerol to the sulfhydryl group of the N-terminal cysteine of a prolipoprotein, the first step in the formation of mature lipoproteins. In Polaromonas naphthalenivorans (strain CJ2), this protein is Phosphatidylglycerol--prolipoprotein diacylglyceryl transferase.